The sequence spans 134 residues: Prolactin (134 aa).

Cys-126 and Cys-134 are joined by a disulfide.

Belongs to the somatotropin/prolactin family.

It is found in the secreted. The chain is Prolactin from Bufo japonicus (Japanese common toad).